Here is a 390-residue protein sequence, read N- to C-terminus: tRNA-specific 2-thiouridylase MnmA (390 aa).

Residues 36–43 (GMSGGVDS) and Met-62 each bind ATP. Positions 122-124 (NPD) are interaction with target base in tRNA. Cys-127 serves as the catalytic Nucleophile. Cys-127 and Cys-223 are disulfide-bonded. Gly-151 provides a ligand contact to ATP. The tract at residues 173–175 (KDQ) is interaction with tRNA. Cys-223 acts as the Cysteine persulfide intermediate in catalysis. The interval 335–336 (RY) is interaction with tRNA.

This sequence belongs to the MnmA/TRMU family.

Its subcellular location is the cytoplasm. The enzyme catalyses S-sulfanyl-L-cysteinyl-[protein] + uridine(34) in tRNA + AH2 + ATP = 2-thiouridine(34) in tRNA + L-cysteinyl-[protein] + A + AMP + diphosphate + H(+). Catalyzes the 2-thiolation of uridine at the wobble position (U34) of tRNA, leading to the formation of s(2)U34. This Marinomonas sp. (strain MWYL1) protein is tRNA-specific 2-thiouridylase MnmA.